The following is a 400-amino-acid chain: Golgin-45 (400 aa).

Residues 1–36 (MEKMTTLKSFESKGILTSTPIRGAGDGMETEEPPKS) form a disordered region. The Tankyrase-binding motif signature appears at 22 to 26 (RGAGD). Ser53 bears the Phosphoserine mark. The stretch at 126–263 (LSEVKKVLEK…LSEREQFRQE (138 aa)) forms a coiled coil. Residue Ser356 is modified to Phosphoserine. Residues 394-400 (QGELLAL) form an essential for interaction with GORASP2 region.

In terms of assembly, interacts with GORASP2. Interacts with the GTP-bound form of RAB2, but not with other Golgi Rab proteins. Identified in a complex with RAB2 and GORASP2. Post-translationally, ADP-ribosylated by tankyrase TNKS and TNKS2. Poly-ADP-ribosylated protein is recognized by RNF146, followed by ubiquitination. In terms of processing, ubiquitinated by RNF146 when poly-ADP-ribosylated, leading to its degradation.

The protein resides in the golgi apparatus membrane. Its function is as follows. Required for normal Golgi structure and for protein transport from the endoplasmic reticulum (ER) through the Golgi apparatus to the cell surface. The protein is Golgin-45 of Rattus norvegicus (Rat).